Here is a 331-residue protein sequence, read N- to C-terminus: MGEKDIPRNLKEEEEEEEENQSEETKSLISSLPSDIDCSGTKLYKYQGCWYDKDILQAILNFNKNFQPQETDIIVASFPKSGTTWLKALTFALAQRSKHTSDNHPLLTHNPHELVPYLELDLYLKSSKPDLTKLPSSSPRLFSTHMSFDALKVPLKESPCKIVYVCRNVKDVLVSLWCFENSMSGENNLSLEALFESLCSGVNLCGPLWENVLGYWRGSLEDPKHVLFLRYEELKTEPRVQIKRLAEFLDCPFTKEEEDSGGVDKILELCSLRNLSGLEINKTGSLSEGVSFKSFFRKGEVGDWKSYMTPEMENKIDMIVEEKLQGSGLKL.

Residues 1–11 (MGEKDIPRNLK) are compositionally biased toward basic and acidic residues. The disordered stretch occupies residues 1-31 (MGEKDIPRNLKEEEEEEEENQSEETKSLISS). Over residues 12 to 22 (EEEEEEEENQS) the composition is skewed to acidic residues. Residue 80–85 (KSGTTW) participates in 3'-phosphoadenylyl sulfate binding. His145 acts as the Proton acceptor in catalysis. Residues Arg167, Ser175, Tyr231, and 297–299 (RKG) contribute to the 3'-phosphoadenylyl sulfate site.

This sequence belongs to the sulfotransferase 1 family. In terms of tissue distribution, expressed in seedlings and roots.

It is found in the cytoplasm. In terms of biological role, sulfotransferase that utilizes 3'-phospho-5'-adenylyl sulfate (PAPS) as sulfonate donor. No activity with brassinosteroids. In Arabidopsis thaliana (Mouse-ear cress), this protein is Cytosolic sulfotransferase 8 (SOT8).